The following is a 458-amino-acid chain: Gamma aminobutyrate transaminase 2 (458 aa).

114 to 115 (GS) is a binding site for pyridoxal 5'-phosphate. Tyrosine 147 contributes to the substrate binding site. Position 254 (aspartate 254) interacts with pyridoxal 5'-phosphate. Substrate is bound at residue lysine 283. The residue at position 283 (lysine 283) is an N6-(pyridoxal phosphate)lysine.

It belongs to the class-III pyridoxal-phosphate-dependent aminotransferase family. As to expression, expressed in leaves, roots, stems, flowers and fruits. Expressed in carpels, but not in stamens.

The protein localises to the cytoplasm. The enzyme catalyses 4-aminobutanoate + pyruvate = succinate semialdehyde + L-alanine. The catalysed reaction is 4-aminobutanoate + glyoxylate = succinate semialdehyde + glycine. Its function is as follows. Transaminase that degrades gamma-amino butyric acid (GABA) and uses pyruvate or glyoxylate as amino-group acceptor. Cannot use beta-alanine, ornithine, acetylornithine, serine, glycine, asparagine, glutamine, glutamate, valine, leucine, isoleucine, methionine, phenylalanine, histidine, lysine, arginine, aspartate, threonine, tyrosine, tryptophan, proline, or cysteine as amino donors. May be responsible for establishing the GABA gradient in the carpel. The polypeptide is Gamma aminobutyrate transaminase 2 (GABA-TP2) (Solanum lycopersicum (Tomato)).